A 112-amino-acid polypeptide reads, in one-letter code: MSNIYDSANELSRGLRGLPEYKAVKAAKDAIAADAEASKIFTEYLAFQEEIQKLAQTGQMPDASFQAKMEGFGKQIQGNSLLSEFFTKQQQLAIYLSDIEKIVFEPVSELLK.

This sequence belongs to the UPF0342 family.

The sequence is that of UPF0342 protein SPH_1504 from Streptococcus pneumoniae (strain Hungary19A-6).